A 318-amino-acid polypeptide reads, in one-letter code: Beta-galactosidase small subunit (318 aa).

The protein belongs to the bacterial beta-galactosidase small subunit family. Heterodimer of a large (LacL) and a small subunit (LacM).

The catalysed reaction is Hydrolysis of terminal non-reducing beta-D-galactose residues in beta-D-galactosides.. In terms of biological role, component of a beta-galactosidase. The polypeptide is Beta-galactosidase small subunit (Latilactobacillus sakei (Lactobacillus sakei)).